The following is a 288-amino-acid chain: Eukaryotic translation initiation factor 3 subunit F-2 (288 aa).

The MPN domain occupies 12–149; that stretch reads VLLHPLVLFQ…TRIFCAVATG (138 aa).

The protein belongs to the eIF-3 subunit F family. As to quaternary structure, component of the eukaryotic translation initiation factor 3 (eIF-3) complex. The eIF-3 complex interacts with pix.

The protein localises to the cytoplasm. Its function is as follows. Component of the eukaryotic translation initiation factor 3 (eIF-3) complex, which is involved in protein synthesis of a specialized repertoire of mRNAs and, together with other initiation factors, stimulates binding of mRNA and methionyl-tRNAi to the 40S ribosome. The eIF-3 complex specifically targets and initiates translation of a subset of mRNAs involved in cell proliferation. This is Eukaryotic translation initiation factor 3 subunit F-2 from Drosophila pseudoobscura pseudoobscura (Fruit fly).